Here is a 312-residue protein sequence, read N- to C-terminus: Ribonuclease Z (312 aa).

The Zn(2+) site is built by histidine 62, histidine 64, aspartate 66, histidine 67, histidine 144, aspartate 215, and histidine 273. Aspartate 66 serves as the catalytic Proton acceptor.

This sequence belongs to the RNase Z family. In terms of assembly, homodimer. Zn(2+) serves as cofactor.

The enzyme catalyses Endonucleolytic cleavage of RNA, removing extra 3' nucleotides from tRNA precursor, generating 3' termini of tRNAs. A 3'-hydroxy group is left at the tRNA terminus and a 5'-phosphoryl group is left at the trailer molecule.. Its function is as follows. Zinc phosphodiesterase, which displays some tRNA 3'-processing endonuclease activity. Probably involved in tRNA maturation, by removing a 3'-trailer from precursor tRNA. The protein is Ribonuclease Z of Prochlorococcus marinus (strain AS9601).